Consider the following 264-residue polypeptide: ATP synthase subunit a (264 aa).

The next 7 membrane-spanning stretches (helical) occupy residues 30–50, 90–110, 111–131, 134–154, 177–197, 208–228, and 235–255; these read WNID…WLFY, IAPL…MDMI, PVDW…KVVP, DVNI…YYSI, IPVN…SLAL, LIFI…ALGV, and LIFH…LTIV.

This sequence belongs to the ATPase A chain family. F-type ATPases have 2 components, CF(1) - the catalytic core - and CF(0) - the membrane proton channel. CF(1) has five subunits: alpha(3), beta(3), gamma(1), delta(1), epsilon(1). CF(0) has three main subunits: a(1), b(2) and c(9-12). The alpha and beta chains form an alternating ring which encloses part of the gamma chain. CF(1) is attached to CF(0) by a central stalk formed by the gamma and epsilon chains, while a peripheral stalk is formed by the delta and b chains.

It localises to the cell inner membrane. Functionally, key component of the proton channel; it plays a direct role in the translocation of protons across the membrane. This Shewanella frigidimarina (strain NCIMB 400) protein is ATP synthase subunit a.